A 202-amino-acid chain; its full sequence is uncharacterized protein (202 aa).

It is found in the mitochondrion. This is an uncharacterized protein from Schizosaccharomyces pombe (strain 972 / ATCC 24843) (Fission yeast).